The chain runs to 129 residues: uncharacterized protein (129 aa).

Transmembrane regions (helical) follow at residues 35–55 and 98–118; these read IVDG…WKIP and ILLL…IILL.

The protein localises to the membrane. This is an uncharacterized protein from Saccharomyces cerevisiae (strain ATCC 204508 / S288c) (Baker's yeast).